A 238-amino-acid chain; its full sequence is Small ribosomal subunit protein uS2 (238 aa).

Belongs to the universal ribosomal protein uS2 family.

The polypeptide is Small ribosomal subunit protein uS2 (Synechococcus sp. (strain CC9311)).